Here is a 1069-residue protein sequence, read N- to C-terminus: Leucine--tRNA ligase (1069 aa).

Residues 19–53 are disordered; the sequence is TAEHGTGAANATASPSGAVPPSGATATAGTGDEPG. A 'HIGH' region motif is present at residues 107–118; it reads PYPSGTGLHVGH. Positions 823 to 836 are enriched in basic and acidic residues; sequence GRFTHHGAPVDRRS. Positions 823–846 are disordered; the sequence is GRFTHHGAPVDRRSGKMGKSLKNS. The 'KMSKS' region motif lies at 838–842; the sequence is KMGKS. ATP is bound at residue K841.

It belongs to the class-I aminoacyl-tRNA synthetase family.

It is found in the cytoplasm. It carries out the reaction tRNA(Leu) + L-leucine + ATP = L-leucyl-tRNA(Leu) + AMP + diphosphate. The chain is Leucine--tRNA ligase from Frankia alni (strain DSM 45986 / CECT 9034 / ACN14a).